A 114-amino-acid chain; its full sequence is Large ribosomal subunit protein bL19 (114 aa).

It belongs to the bacterial ribosomal protein bL19 family.

Its function is as follows. This protein is located at the 30S-50S ribosomal subunit interface and may play a role in the structure and function of the aminoacyl-tRNA binding site. The chain is Large ribosomal subunit protein bL19 from Thermobifida fusca (strain YX).